The chain runs to 398 residues: Chalcone synthase 1 (398 aa).

58–65 (KFKRMCDK) lines the CoA pocket. The active-site Acyl-thioester intermediate is the C167. Substrate is bound by residues T200 and 219–220 (GD). A311 is a CoA binding site.

The protein belongs to the thiolase-like superfamily. Chalcone/stilbene synthases family. As to quaternary structure, homodimer.

It catalyses the reaction (E)-4-coumaroyl-CoA + 3 malonyl-CoA + 3 H(+) = 2',4,4',6'-tetrahydroxychalcone + 3 CO2 + 4 CoA. Its pathway is secondary metabolite biosynthesis; flavonoid biosynthesis. In terms of biological role, the primary product of this enzyme is 4,2',4',6'-tetrahydroxychalcone (also termed naringenin-chalcone or chalcone) which can under specific conditions spontaneously isomerize into naringenin. The chain is Chalcone synthase 1 (CHS1) from Oryza sativa subsp. indica (Rice).